Reading from the N-terminus, the 260-residue chain is Tropinone reductase homolog At2g29330 (260 aa).

Position 13–37 (13–37) interacts with NADP(+); it reads LVTGGASGIGHAIVEELAGFGAKIH. S146 contacts substrate. The active-site Proton acceptor is Y159.

Belongs to the short-chain dehydrogenases/reductases (SDR) family. SDR65C subfamily.

In terms of biological role, reductase active only on small flexible lipophilic carbonyls. No activity with cyclic monoterpenes, tropinone, nitrogen-containing tropinone analogs, tropine or pseudotropine as substrate. The sequence is that of Tropinone reductase homolog At2g29330 from Arabidopsis thaliana (Mouse-ear cress).